Reading from the N-terminus, the 523-residue chain is Exodeoxyribonuclease 7 large subunit (523 aa).

Positions 502–523 (PGASPAARTRAGKAKADQGSLF) are disordered.

This sequence belongs to the XseA family. In terms of assembly, heterooligomer composed of large and small subunits.

The protein resides in the cytoplasm. It catalyses the reaction Exonucleolytic cleavage in either 5'- to 3'- or 3'- to 5'-direction to yield nucleoside 5'-phosphates.. In terms of biological role, bidirectionally degrades single-stranded DNA into large acid-insoluble oligonucleotides, which are then degraded further into small acid-soluble oligonucleotides. This is Exodeoxyribonuclease 7 large subunit from Rhodospirillum centenum (strain ATCC 51521 / SW).